A 212-amino-acid chain; its full sequence is uncharacterized protein (212 aa).

3 consecutive Pentapeptide repeat domains span residues 63–102, 103–142, and 143–182; these read VSFR…KMVG, MNVA…ALMQ, and SECS…RFEQ.

This is an uncharacterized protein from Bacillus subtilis (strain 168).